The chain runs to 355 residues: Chorismate synthase (355 aa).

Arg44 and Arg49 together coordinate NADP(+). Residues 121–123 (HFS), Gly277, 292–296 (KPTPS), and Arg319 each bind FMN.

It belongs to the chorismate synthase family. It depends on FMNH2 as a cofactor.

It carries out the reaction 5-O-(1-carboxyvinyl)-3-phosphoshikimate = chorismate + phosphate. It participates in metabolic intermediate biosynthesis; chorismate biosynthesis; chorismate from D-erythrose 4-phosphate and phosphoenolpyruvate: step 7/7. Functionally, catalyzes the anti-1,4-elimination of the C-3 phosphate and the C-6 proR hydrogen from 5-enolpyruvylshikimate-3-phosphate (EPSP) to yield chorismate, which is the branch point compound that serves as the starting substrate for the three terminal pathways of aromatic amino acid biosynthesis. This reaction introduces a second double bond into the aromatic ring system. This is Chorismate synthase from Thermococcus kodakarensis (strain ATCC BAA-918 / JCM 12380 / KOD1) (Pyrococcus kodakaraensis (strain KOD1)).